The primary structure comprises 548 residues: Chaperonin GroEL (548 aa).

ATP-binding positions include 30–33 (TLGP), Lys-51, 87–91 (DGTTT), Gly-415, and Asp-494.

Belongs to the chaperonin (HSP60) family. Forms a cylinder of 14 subunits composed of two heptameric rings stacked back-to-back. Interacts with the co-chaperonin GroES.

It is found in the cytoplasm. The catalysed reaction is ATP + H2O + a folded polypeptide = ADP + phosphate + an unfolded polypeptide.. Functionally, together with its co-chaperonin GroES, plays an essential role in assisting protein folding. The GroEL-GroES system forms a nano-cage that allows encapsulation of the non-native substrate proteins and provides a physical environment optimized to promote and accelerate protein folding. The sequence is that of Chaperonin GroEL from Oleispira antarctica.